Reading from the N-terminus, the 257-residue chain is Type I iodothyronine deiodinase (257 aa).

Topologically, residues 1 to 12 (MGLPGLGLLLKR) are extracellular. A helical; Signal-anchor for type III membrane protein transmembrane segment spans residues 13–33 (FGVLVRVALKVAVGKVLLTLW). Residues 34–257 (PSAIRPHLLA…CRSSAQSPRL (224 aa)) are Cytoplasmic-facing. U126 is an active-site residue. U126 is a non-standard amino acid (selenocysteine).

Belongs to the iodothyronine deiodinase family. Predominantly monomer. Can form homodimers but homodimerization is not essential for enzyme activity. As to expression, liver specific.

The protein resides in the cell membrane. Its subcellular location is the endoplasmic reticulum membrane. It is found in the basolateral cell membrane. It catalyses the reaction 3,3',5-triiodo-L-thyronine + iodide + A + H(+) = L-thyroxine + AH2. It carries out the reaction 3,3',5'-triiodo-L-thyronine + iodide + A + H(+) = L-thyroxine + AH2. The catalysed reaction is 3,3'-diiodo-L-thyronine + iodide + A + H(+) = 3,3',5'-triiodo-L-thyronine + AH2. The enzyme catalyses 3,3'-diiodo-L-thyronine + iodide + A + H(+) = 3,3',5-triiodo-L-thyronine + AH2. It catalyses the reaction 3'-iodo-L-thyronine + iodide + A + H(+) = 3',5'-diiodo-L-thyronine + AH2. It carries out the reaction 3-iodo-L-thyronine + iodide + A + H(+) = 3,5-diiodo-L-thyronine + AH2. The catalysed reaction is 3-iodo-L-thyronine + iodide + A + H(+) = 3,3'-diiodo-L-thyronine + AH2. The enzyme catalyses 3,3'-diiodothyronamine + iodide + A + H(+) = 3,3',5'-triiodothyronamine + AH2. It catalyses the reaction 3'-iodothyronamine + iodide + A + H(+) = 3',5'-diiodothyronamine + AH2. It carries out the reaction 3-iodothyronamine + iodide + A + H(+) = 3,3'-diiodothyronamine + AH2. The catalysed reaction is 3,3'-diiodothyronamine + iodide + A + H(+) = 3,3',5-triiodothyronamine + AH2. The enzyme catalyses 3-iodothyronamine + iodide + A + H(+) = 3,5-diiodothyronamine + AH2. It catalyses the reaction 3,3'-diiodo-L-thyronine sulfate + iodide + A + H(+) = 3,3',5'-triiodo-L-thyronine sulfate + AH2. It carries out the reaction 3,3',5'-triiodo-L-thyronine sulfate + iodide + A + H(+) = L-thyroxine sulfate + AH2. The catalysed reaction is 3,3'-diiodo-L-thyronine sulfate + iodide + A + H(+) = 3,3',5-triiodo-L-thyronine sulfate + AH2. Its function is as follows. Plays a crucial role in the metabolism of thyroid hormones (TH) and has specific roles in TH activation and inactivation by deiodination. Catalyzes the deiodination of L-thyroxine (T4) to 3,5,3'-triiodothyronine (T3) and 3',5'-diiodothyronine (3',5'-T2) to 3'-monoiodothyronine (3'-T1) via outer-ring deiodination (ORD). Catalyzes the deiodination of T4 to 3,3',5'-triiodothyronine (rT3), T3 to 3,3'-diiodothyronine (3,3'-T2), 3,5-diiodothyronine (3,5-T2) to 3-monoiodothyronine (3-T1) and 3,3'-T2 to 3-T1 via inner-ring deiodination (IRD). Catalyzes the deiodination of rT3 to 3,3'-T2 via ORD. Catalyzes the phenolic ring deiodinations of 3,3',5'-triiodothyronamine, 3',5'-diiodothyronamine and 3,3'-diiodothyronamine as well as tyrosyl ring deiodinations of 3,5,3'-triiodothyronamine and 3,5-diiodothyronamine. Catalyzes the deiodination of L-thyroxine sulfate and 3,3',5-triiodo-L-thyronine sulfate via IRD and of 3,3',5'-triiodo-L-thyronine sulfate via ORD. This is Type I iodothyronine deiodinase (DIO1) from Suncus murinus (Asian house shrew).